The sequence spans 302 residues: Sodium/potassium-transporting ATPase subunit beta-233 (302 aa).

Over 1–30 the chain is Cytoplasmic; that stretch reads MSGNKDSDGGWKTFIWNSEKKELLGRTGCS. The helical; Signal-anchor for type II membrane protein transmembrane segment at 31 to 51 threads the bilayer; sequence WFKILLFYVIFYGCLAAVFVG. The Extracellular portion of the chain corresponds to 52-302; it reads TIQALLLTLS…FDIKITVNDS (251 aa). 2 disulfide bridges follow: cysteine 125-cysteine 148 and cysteine 158-cysteine 174. N-linked (GlcNAc...) asparagine glycans are attached at residues asparagine 193 and asparagine 263. Cysteines 213 and 274 form a disulfide.

This sequence belongs to the X(+)/potassium ATPases subunit beta family. The sodium/potassium-transporting ATPase is composed of a catalytic alpha subunit, an auxiliary non-catalytic beta subunit and an additional regulatory subunit. In terms of processing, glycosylated. As to expression, expressed mainly in epithelial tissues.

The protein resides in the cell membrane. Its function is as follows. This is the non-catalytic component of the active enzyme, which catalyzes the hydrolysis of ATP coupled with the exchange of Na(+) and K(+) ions across the plasma membrane. The beta subunit regulates, through assembly of alpha/beta heterodimers, the number of sodium pumps transported to the plasma membrane. The protein is Sodium/potassium-transporting ATPase subunit beta-233 of Anguilla anguilla (European freshwater eel).